The primary structure comprises 189 residues: Peptidyl-tRNA hydrolase (189 aa).

TRNA is bound at residue Y18. The active-site Proton acceptor is H23. TRNA is bound by residues F67, N69, and N115.

The protein belongs to the PTH family. In terms of assembly, monomer.

It is found in the cytoplasm. It catalyses the reaction an N-acyl-L-alpha-aminoacyl-tRNA + H2O = an N-acyl-L-amino acid + a tRNA + H(+). Functionally, hydrolyzes ribosome-free peptidyl-tRNAs (with 1 or more amino acids incorporated), which drop off the ribosome during protein synthesis, or as a result of ribosome stalling. Catalyzes the release of premature peptidyl moieties from peptidyl-tRNA molecules trapped in stalled 50S ribosomal subunits, and thus maintains levels of free tRNAs and 50S ribosomes. The chain is Peptidyl-tRNA hydrolase from Leptospira borgpetersenii serovar Hardjo-bovis (strain JB197).